Reading from the N-terminus, the 424-residue chain is 5-methylthioadenosine/S-adenosylhomocysteine deaminase (424 aa).

Zn(2+) is bound by residues histidine 60 and histidine 62. Residues glutamate 89 and histidine 181 each coordinate substrate. Residue histidine 208 participates in Zn(2+) binding. 2 residues coordinate substrate: glutamate 211 and aspartate 296. Aspartate 296 contributes to the Zn(2+) binding site.

It belongs to the metallo-dependent hydrolases superfamily. MTA/SAH deaminase family. Requires Zn(2+) as cofactor.

It catalyses the reaction S-adenosyl-L-homocysteine + H2O + H(+) = S-inosyl-L-homocysteine + NH4(+). The enzyme catalyses S-methyl-5'-thioadenosine + H2O + H(+) = S-methyl-5'-thioinosine + NH4(+). Catalyzes the deamination of 5-methylthioadenosine and S-adenosyl-L-homocysteine into 5-methylthioinosine and S-inosyl-L-homocysteine, respectively. Is also able to deaminate adenosine. This Thermococcus sibiricus (strain DSM 12597 / MM 739) protein is 5-methylthioadenosine/S-adenosylhomocysteine deaminase.